The primary structure comprises 153 residues: UPF0127 protein TGAM_1372 (153 aa).

Belongs to the UPF0127 family.

The protein is UPF0127 protein TGAM_1372 of Thermococcus gammatolerans (strain DSM 15229 / JCM 11827 / EJ3).